A 698-amino-acid chain; its full sequence is Polyribonucleotide nucleotidyltransferase (698 aa).

Mg(2+) contacts are provided by D490 and D496. The KH domain occupies P557 to I616. The S1 motif domain occupies G626–R694.

This sequence belongs to the polyribonucleotide nucleotidyltransferase family. Mg(2+) is required as a cofactor.

The protein resides in the cytoplasm. It carries out the reaction RNA(n+1) + phosphate = RNA(n) + a ribonucleoside 5'-diphosphate. Involved in mRNA degradation. Catalyzes the phosphorolysis of single-stranded polyribonucleotides processively in the 3'- to 5'-direction. In Staphylococcus aureus (strain Mu3 / ATCC 700698), this protein is Polyribonucleotide nucleotidyltransferase.